The following is a 2231-amino-acid chain: Helicase SEN1 (2231 aa).

A compositionally biased stretch (low complexity) spans 1–17 (MNSNNPDNNNSNNINNN). 2 disordered regions span residues 1 to 24 (MNSN…KDIA) and 1032 to 1061 (HPPS…SDND). ATP is bound by residues Q1339 and 1360-1364 (GTGKT). Residues 1491-1511 (ELRGKLDSESGNPESPMSTED) are disordered. Residues 1499-1510 (ESGNPESPMSTE) show a composition bias toward polar residues. 3 residues coordinate ATP: Q1619, Y1655, and E1787. Disordered stretches follow at residues 1894–1993 (ITQG…AVVG) and 2032–2231 (QLGL…KPRS). The Nuclear localization signal motif lies at 1909-1927 (KRRVVDEGEEADKAVKKKK). Residues 1923-1937 (VKKKKKEKKKEKKKS) are compositionally biased toward basic residues. The segment covering 1938–1950 (KADDKKKNNKKAE) has biased composition (basic and acidic residues). Over residues 2048–2058 (NNEDDDDEDDY) the composition is skewed to acidic residues. Polar residues-rich tracts occupy residues 2060-2088 (PSIS…NFSA) and 2095-2104 (QVSQAKQTQV). The span at 2114-2123 (SNSVLSGGSS) shows a compositional bias: low complexity. Over residues 2134–2160 (PNQNGQNGANRTLSQHVGNANQYSTAP) the composition is skewed to polar residues. Positions 2210 to 2220 (RNSSRRNASSS) are enriched in low complexity.

Belongs to the DNA2/NAM7 helicase family. As to quaternary structure, interacts with RAD2, RNT1 and RPB1. Binds to multiple snoRNAs.

It localises to the nucleus. Its function is as follows. ATP-dependent 5'-&gt;3' DNA/RNA helicase required for the expression and maturation of diverse classes of non-protein-coding RNAs like precursor tRNAs, rRNAs and small nuclear (snRNA) and nucleolar (snoRNA) RNAs. Directs RNA polymerase II transcription termination on snoRNAs as well as on several short protein-coding genes. May also play a role in transcription-coupled nucleotide excision repair. The polypeptide is Helicase SEN1 (SEN1) (Saccharomyces cerevisiae (strain ATCC 204508 / S288c) (Baker's yeast)).